A 255-amino-acid chain; its full sequence is Ribonuclease HII (255 aa).

One can recognise an RNase H type-2 domain in the interval 72–255 (AIICGIDEVG…KSFEPIKSLL (184 aa)). A divalent metal cation-binding residues include Asp-78, Glu-79, and Asp-170.

It belongs to the RNase HII family. The cofactor is Mn(2+). It depends on Mg(2+) as a cofactor.

It localises to the cytoplasm. The catalysed reaction is Endonucleolytic cleavage to 5'-phosphomonoester.. In terms of biological role, endonuclease that specifically degrades the RNA of RNA-DNA hybrids. This is Ribonuclease HII from Staphylococcus aureus (strain MRSA252).